Here is a 249-residue protein sequence, read N- to C-terminus: Proteasome subunit alpha type-4 (249 aa).

This sequence belongs to the peptidase T1A family. In terms of assembly, the 26S proteasome consists of a 20S proteasome core and two 19S regulatory subunits. The 20S proteasome core is composed of 28 subunits that are arranged in four stacked rings, resulting in a barrel-shaped structure. The two end rings are each formed by seven alpha subunits, and the two central rings are each formed by seven beta subunits. The catalytic chamber with the active sites is on the inside of the barrel.

Its subcellular location is the cytoplasm. The protein resides in the nucleus. The proteasome is a multicatalytic proteinase complex which is characterized by its ability to cleave peptides with Arg, Phe, Tyr, Leu, and Glu adjacent to the leaving group at neutral or slightly basic pH. The proteasome has an ATP-dependent proteolytic activity. This is Proteasome subunit alpha type-4 (PAC1) from Petunia hybrida (Petunia).